Here is a 229-residue protein sequence, read N- to C-terminus: UPF0758 protein MM_2791 (229 aa).

Residues 106–228 enclose the MPN domain; sequence KISSPKDVYT…YVSLKDEGFV (123 aa). Zn(2+) is bound by residues His177, His179, and Asp190. A JAMM motif motif is present at residues 177 to 190; sequence HNHPSGDPSPSRED.

This sequence belongs to the UPF0758 family.

This Methanosarcina mazei (strain ATCC BAA-159 / DSM 3647 / Goe1 / Go1 / JCM 11833 / OCM 88) (Methanosarcina frisia) protein is UPF0758 protein MM_2791.